A 603-amino-acid polypeptide reads, in one-letter code: Podocalyxin-like protein 2 (603 aa).

A signal peptide spans 1–28 (MARPLRAARLPPPLLLLLAAGASLGAYA). Topologically, residues 29–499 (VGVDEPGPEG…ATQVRSDYGT (471 aa)) are extracellular. Residues 53–92 (FEPLDSEEPSEAMGLDAGLAPGSGFPSEDSEESRLLQPPQ) are disordered. An O-linked (Xyl...) (chondroitin sulfate) serine glycan is attached at serine 75. Tyrosine 93 carries the sulfotyrosine modification. A glycan (N-linked (GlcNAc...) asparagine) is linked at asparagine 101. Tyrosine 113 is modified (sulfotyrosine). The interval 124 to 368 (SMEDPGQAPD…LEGQAAEAHS (245 aa)) is disordered. The span at 156–187 (QEEEEEEEEEEEEREEEEREKEAEEEEEEEEL) shows a compositional bias: acidic residues. Residues 196 to 216 (ATAQAHAPSPSTSSSTSSQSP) show a composition bias toward low complexity. Composition is skewed to polar residues over residues 240–266 (VKPTLSVPSVTPSTVAPGVQNYSQESG), 302–314 (ALPSSSLPQTVPP), and 339–349 (DTESTPSSATW). Residue asparagine 260 is glycosylated (N-linked (GlcNAc...) asparagine). Asparagine 394 carries an N-linked (GlcNAc...) asparagine glycan. Residues 500-520 (LFVVLVIIGVICFIIIVLGLL) form a helical membrane-spanning segment. Residues 521–603 (YNCWQRRMPK…SDVFEEDTHL (83 aa)) are Cytoplasmic-facing. A compositionally biased stretch (polar residues) spans 558-570 (DSQSEMQEKQPSL). The disordered stretch occupies residues 558–603 (DSQSEMQEKQPSLNGGAINGPSSWSALMGSKRDPEDSDVFEEDTHL). A phosphoserine mark is found at serine 569 and serine 594. Residues 592–603 (EDSDVFEEDTHL) show a composition bias toward acidic residues.

It belongs to the podocalyxin family. As to quaternary structure, homodimer; disulfide-linked. Interacts with SELL, SELE and SELP. Glycosylated; contains chondroitin sulfate. Displays sialylated O-linked oligosaccharides. In terms of processing, sulfation is necessary for interaction with SELL. Sialylated O-linked oligosaccharides are necessary for interaction with SELL, SELE and SELP.

Its subcellular location is the membrane. Acts as a ligand for vascular selectins. Mediates rapid rolling of leukocytes over vascular surfaces through high affinity divalent cation-dependent interactions with E-, P- and L-selectins. This is Podocalyxin-like protein 2 (Podxl2) from Mus musculus (Mouse).